The chain runs to 315 residues: Olfactory receptor 3A1 (315 aa).

Residues 1–28 (MQPESGANGTVIAEFILLGLLEAPGLQP) lie on the Extracellular side of the membrane. Asn-8 carries an N-linked (GlcNAc...) asparagine glycan. The chain crosses the membrane as a helical span at residues 29-52 (VVFVLFLFAYLVTVGGNLSILAAV). Topologically, residues 53 to 60 (LVEPKLHS) are cytoplasmic. The chain crosses the membrane as a helical span at residues 61–82 (PMYFFLGNLSVLDVGCISVTVP). Topologically, residues 83 to 103 (SMLSRLLSRKRAVPCGACLTQ) are extracellular. A disulfide bridge links Cys-100 with Cys-192. Residues 104–123 (LFFFHLFVGVDCFLLTAMAY) form a helical membrane-spanning segment. The Cytoplasmic portion of the chain corresponds to 124-143 (DRFLAICRPLTYSTRMSQTV). The chain crosses the membrane as a helical span at residues 144–161 (QRMLVAASWACAFTNALT). At 162 to 199 (HTVAMSTLNFCGPNEVNHFYCDLPQLFQLSCSSTQLNE) the chain is on the extracellular side. A helical transmembrane segment spans residues 200 to 223 (LLLFAVGFIMAGTPMALIVISYIH). Residues 224–240 (VAAAVLRIRSVEGRKKA) are Cytoplasmic-facing. A helical membrane pass occupies residues 241–264 (FSTCGSHLTVVAMFYGSGIFNYMR). Residues 265 to 275 (LGSTKLSDKDK) lie on the Extracellular side of the membrane. The helical transmembrane segment at 276 to 295 (AVGIFNTVINPMVNPIIYRF) threads the bilayer. Residues 296 to 315 (RNPEVQSAIWRMLTGRRSLA) are Cytoplasmic-facing.

Belongs to the G-protein coupled receptor 1 family.

Its subcellular location is the cell membrane. Functionally, odorant receptor. The polypeptide is Olfactory receptor 3A1 (OR3A1) (Pan troglodytes (Chimpanzee)).